Here is a 365-residue protein sequence, read N- to C-terminus: Chorismate synthase (365 aa).

R47 lines the NADP(+) pocket. Residues 124–126 (RAS), G287, 302–306 (KPTAT), and R328 contribute to the FMN site. The tract at residues 266-290 (FIKSDDSSKLRTTSNNSGGIQGGIS) is disordered.

The protein belongs to the chorismate synthase family. Homotetramer. It depends on FMNH2 as a cofactor.

The catalysed reaction is 5-O-(1-carboxyvinyl)-3-phosphoshikimate = chorismate + phosphate. It participates in metabolic intermediate biosynthesis; chorismate biosynthesis; chorismate from D-erythrose 4-phosphate and phosphoenolpyruvate: step 7/7. Catalyzes the anti-1,4-elimination of the C-3 phosphate and the C-6 proR hydrogen from 5-enolpyruvylshikimate-3-phosphate (EPSP) to yield chorismate, which is the branch point compound that serves as the starting substrate for the three terminal pathways of aromatic amino acid biosynthesis. This reaction introduces a second double bond into the aromatic ring system. The protein is Chorismate synthase of Prochlorococcus marinus (strain MIT 9301).